A 309-amino-acid polypeptide reads, in one-letter code: MSEINISAVVVKELREKTGAGMMDCKKALIETSGNFEEAIDFLRKKGLAAAVKKSGRIASEGLTAVKVDGLISAVIEVNSETDFVARNKQFQDLVKDIVNLAIIAQNIDTLKISKMQSGKSVEEEIIDNIAIIGENLTLRRMDILEISNGAIGSYVHNEVVPHLGKISVLVGLESNAKDKVKLEALAKQIAVHVAGNNPQSIDTLSLDKSLIEREKKVFFEKSKEEGKPNHIIEKMVEGRIRKFFSEVVLLHQNFLFEPKLTVAEVIKNAEQELSAEIKITKFIRYALGEGIEHAEKNFADEVAAITQC.

The segment at 82–85 is involved in Mg(2+) ion dislocation from EF-Tu; sequence TDFV.

This sequence belongs to the EF-Ts family.

It is found in the cytoplasm. In terms of biological role, associates with the EF-Tu.GDP complex and induces the exchange of GDP to GTP. It remains bound to the aminoacyl-tRNA.EF-Tu.GTP complex up to the GTP hydrolysis stage on the ribosome. The chain is Elongation factor Ts (tsf) from Rickettsia prowazekii (strain Madrid E).